Reading from the N-terminus, the 502-residue chain is Protein ANKUB1 (502 aa).

The sequence is that of Protein ANKUB1 (ANKUB1) from Homo sapiens (Human).